The following is a 1262-amino-acid chain: Tau-tubulin kinase homolog Asator (1262 aa).

Residues 13-35 (NASAPDDGNQSCQPSSKQDQYLS) form a disordered region. Residues 20–35 (GNQSCQPSSKQDQYLS) are compositionally biased toward polar residues. One can recognise a Protein kinase domain in the interval 173 to 436 (WKVVRKIGGG…MLIGLFERCM (264 aa)). Residues 179 to 187 (IGGGGFGEI) and Lys202 contribute to the ATP site. The active-site Proton acceptor is Asp293. 3 disordered regions span residues 662-724 (TVTN…TSNA), 755-792 (RSAT…ARSS), and 984-1003 (KDSA…SRHR). Positions 667 to 679 (KTSEVNRSTEEQK) are enriched in basic and acidic residues. Residues 755–776 (RSATSTNLRPSSSASQRINSGS) are compositionally biased toward polar residues.

Belongs to the protein kinase superfamily. CK1 Ser/Thr protein kinase family. As to quaternary structure, interacts with Mgtor. Mg(2+) serves as cofactor. In terms of tissue distribution, detected in larval brain.

It localises to the cytoplasm. It is found in the cytoskeleton. Its subcellular location is the spindle. It carries out the reaction L-seryl-[protein] + ATP = O-phospho-L-seryl-[protein] + ADP + H(+). The enzyme catalyses L-threonyl-[protein] + ATP = O-phospho-L-threonyl-[protein] + ADP + H(+). Functionally, probable serine/threonine protein kinase. In Drosophila melanogaster (Fruit fly), this protein is Tau-tubulin kinase homolog Asator.